The primary structure comprises 704 residues: Acetate--CoA ligase [ADP-forming] (704 aa).

In the N-terminal section; belongs to the acetate CoA ligase alpha subunit family. It in the C-terminal section; belongs to the acetate CoA ligase beta subunit family. As to quaternary structure, homodimer.

It catalyses the reaction acetate + ATP + CoA = acetyl-CoA + ADP + phosphate. Functionally, catalyzes the formation of acetate and ATP from acetyl-CoA by using ADP and phosphate. Can also use butyryl-CoA, but not phenylacetyl-CoA. Cannot catalyze the reverse reaction. This Methanocaldococcus jannaschii (strain ATCC 43067 / DSM 2661 / JAL-1 / JCM 10045 / NBRC 100440) (Methanococcus jannaschii) protein is Acetate--CoA ligase [ADP-forming].